We begin with the raw amino-acid sequence, 38 residues long: Large ribosomal subunit protein bL36 (38 aa).

The protein belongs to the bacterial ribosomal protein bL36 family.

This is Large ribosomal subunit protein bL36 from Pseudothermotoga lettingae (strain ATCC BAA-301 / DSM 14385 / NBRC 107922 / TMO) (Thermotoga lettingae).